Consider the following 361-residue polypeptide: MLRATNNRRTSNNVEKDSLQMAKHGNGPLKPVNAQGLQTKREAREILALKPSNPAPVETAQKSQRINLQDAETKCLAMADDIYKYLVHHEKKYLLEECFMEGGEPTPKMRRILVDWLVQVHVRFHLTPETLHLTVFILDRMLQKKVTSKADLQLLGISAMFVASKFEEVYLPDIHDYEFITENTYSKKQILAMEQTILNSLNFDLSCPSSLVFLRCLSRILSENDASPIDNQAFCYTYNISKCLGELALLDSVMASTPRSHIASASMIIALEVHPVDGIEAENAVSVICKQLGASKKVIEDAVALLAEVSYKNFKQGKLVAIKNKYQSSKLAQVSNLMTDDVLEKINRMGQNAKVDASEME.

The span at M1–N13 shows a compositional bias: polar residues. The tract at residues M1–N33 is disordered.

Belongs to the cyclin family. Cyclin AB subfamily. In terms of assembly, interacts with the CDK1 protein kinase to form a serine/threonine kinase holoenzyme complex also known as maturation promoting factor (MPF). The cyclin subunit imparts substrate specificity to the complex. Interacts with E3 ubiquitin-protein ligase etc-1. Ubiquitinated by etc-1 likely during meiosis, resulting in its degradation.

The protein resides in the cytoplasm. In terms of biological role, essential for the control of the cell cycle at the G2/M (mitosis) transition. The sequence is that of G2/mitotic-specific cyclin-B1 (cyb-1) from Caenorhabditis elegans.